We begin with the raw amino-acid sequence, 431 residues long: Tol-Pal system protein TolB (431 aa).

The first 26 residues, 1–26 (MRLMTKLGFRALVASCLIAAGGAANA), serve as a signal peptide directing secretion. The disordered stretch occupies residues 411 to 431 (PQILSVQGGSVREPSWGPFMQ).

It belongs to the TolB family. The Tol-Pal system is composed of five core proteins: the inner membrane proteins TolA, TolQ and TolR, the periplasmic protein TolB and the outer membrane protein Pal. They form a network linking the inner and outer membranes and the peptidoglycan layer.

It localises to the periplasm. Part of the Tol-Pal system, which plays a role in outer membrane invagination during cell division and is important for maintaining outer membrane integrity. The sequence is that of Tol-Pal system protein TolB from Burkholderia ambifaria (strain MC40-6).